Reading from the N-terminus, the 149-residue chain is Calmodulin (149 aa).

The residue at position 2 (alanine 2) is an N-acetylalanine. EF-hand domains are found at residues glutamate 8–asparagine 43, proline 44–aspartate 79, aspartate 81–lysine 116, and leucine 117–lysine 149. 14 residues coordinate Ca(2+): aspartate 21, aspartate 23, aspartate 25, threonine 27, glutamate 32, aspartate 57, aspartate 59, asparagine 61, threonine 63, glutamate 68, aspartate 94, aspartate 96, asparagine 98, and glutamate 105. Lysine 116 carries the post-translational modification N6,N6,N6-trimethyllysine. Residues aspartate 130, aspartate 132, aspartate 134, glutamine 136, and glutamate 141 each contribute to the Ca(2+) site.

It belongs to the calmodulin family.

Calmodulin mediates the control of a large number of enzymes, ion channels and other proteins by Ca(2+). Among the enzymes to be stimulated by the calmodulin-Ca(2+) complex are a number of protein kinases and phosphatases. The protein is Calmodulin of Macrocystis pyrifera (Giant kelp).